Here is a 313-residue protein sequence, read N- to C-terminus: N-acetyl-gamma-glutamyl-phosphate reductase 2 (313 aa).

Cys-117 is an active-site residue.

Belongs to the NAGSA dehydrogenase family. Type 2 subfamily.

Its subcellular location is the cytoplasm. It catalyses the reaction N-acetyl-L-glutamate 5-semialdehyde + phosphate + NADP(+) = N-acetyl-L-glutamyl 5-phosphate + NADPH + H(+). It functions in the pathway amino-acid biosynthesis; L-arginine biosynthesis; N(2)-acetyl-L-ornithine from L-glutamate: step 3/4. In terms of biological role, catalyzes the NADPH-dependent reduction of N-acetyl-5-glutamyl phosphate to yield N-acetyl-L-glutamate 5-semialdehyde. The chain is N-acetyl-gamma-glutamyl-phosphate reductase 2 from Pseudomonas putida (strain ATCC 47054 / DSM 6125 / CFBP 8728 / NCIMB 11950 / KT2440).